A 425-amino-acid chain; its full sequence is MLLKNCKILKNTKFEKVDILIRDNKIEKISENIDITDENIIDIKNRFVTAGFIDVHVHWREPGFSKKETVYTASRAAARGGFTTVMTMPNLNPVPDSVETLNKQLEIIKKDSVIRAIPYGAITKEEYGRELSDMEAIASNVFAFTDDGRGVQSANVMYEAMLMGAKLNKAIVAHCEDNSLIRGGAMHEGKRSAELGIKGIPSICESTQIVRDVLLAEAANCHYHVCHISAKESVRAVREGKKNGIKVTCEVTPHHLLSCDEDIKEDNGMWKMNPPLRSREDRNALIVGILDGTIDIIATDHAPHTMEEKIRGIEKSSFGIVGSETAFAQLYTKFVKTDIFSLEMLVKLMSENVAKIFDLPYGKLEENSFADIVVIDLEKEITINPNNFLSKGKNTPYINEKINGIPVLTISNGKIAYIDKEEINL.

H56 and H58 together coordinate Zn(2+). Substrate is bound by residues 58–60 and N90; that span reads HWR. Zn(2+) contacts are provided by D147, H174, and H227. N273 is a binding site for substrate. D300 serves as a coordination point for Zn(2+). D300 is an active-site residue. Residues H304 and 318 to 319 each bind substrate; that span reads FG.

This sequence belongs to the metallo-dependent hydrolases superfamily. DHOase family. Class I DHOase subfamily. Zn(2+) is required as a cofactor.

The catalysed reaction is (S)-dihydroorotate + H2O = N-carbamoyl-L-aspartate + H(+). It participates in pyrimidine metabolism; UMP biosynthesis via de novo pathway; (S)-dihydroorotate from bicarbonate: step 3/3. Functionally, catalyzes the reversible cyclization of carbamoyl aspartate to dihydroorotate. This Fusobacterium nucleatum subsp. nucleatum (strain ATCC 25586 / DSM 15643 / BCRC 10681 / CIP 101130 / JCM 8532 / KCTC 2640 / LMG 13131 / VPI 4355) protein is Dihydroorotase.